Here is a 613-residue protein sequence, read N- to C-terminus: Apoptosis-inducing factor 1, mitochondrial (613 aa).

Short sequence motifs (mitochondrial localization signal) lie at residues 1–31 (MFRC…PRQR) and 63–89 (KIDN…KTMK). A mitochondrion-targeting transit peptide spans 1–54 (MFRCGGLAAGALKQKLVPLVRTVCVRSPRQRNRLPGNLFQRWHVPLELQMTRQM). Positions 55-101 (ASSGASGGKIDNSVLVLIVGLSTVGAGAYAYKTMKEDEKRYNERISG) are cleaved as a propeptide — removed in mature form. Residues 100–127 (SGLGLTPEQKQKKAALSASEGEEVPQDK) form a disordered region. Thr-105 bears the Phosphothreonine mark. The residue at position 109 (Lys-109) is an N6-succinyllysine. A phosphoserine mark is found at Ser-116 and Ser-118. The interval 134–483 (FLLIGGGTAA…KPYWHQSMFW (350 aa)) is FAD-dependent oxidoreductase. FAD is bound by residues 138-142 (GGGTA), 164-165 (ED), Arg-172, and Lys-177. Residue Trp-196 coordinates NAD(+). Val-233 lines the FAD pocket. Lys-255 is covalently cross-linked (Glycyl lysine isopeptide (Lys-Gly) (interchain with G-Cter in ubiquitin)). Position 268 is a phosphoserine (Ser-268). Arg-285 is an FAD binding site. The residue at position 292 (Ser-292) is a Phosphoserine. NAD(+) is bound by residues 308–311 (GGFL), Glu-336, and Lys-342. A Phosphoserine modification is found at Ser-371. N6-acetyllysine is present on Lys-388. Position 399 (Gly-399) interacts with NAD(+). FAD is bound at residue Asp-438. The short motif at 446–451 (KLGRRR) is the Nuclear localization signal element. Residues 453–454 (EH), Trp-483, and Glu-493 contribute to the NAD(+) site. Residues 454–455 (HH) and Trp-483 contribute to the FAD site. The segment covering 513–529 (AQDNPKSATEQSGTGIR) has biased composition (polar residues). The disordered stretch occupies residues 513 to 554 (AQDNPKSATEQSGTGIRSESETESEASEITIPPSTPAVPQAP). Phosphothreonine is present on Thr-521. 2 positions are modified to phosphoserine: Ser-524 and Ser-530. Asn-583 is an NAD(+) binding site. At Lys-593 the chain carries N6-acetyllysine.

The protein belongs to the FAD-dependent oxidoreductase family. Monomer (oxidized form). Homodimer (reduced form). Upon reduction with NADH, undergoes dimerization and forms tight, long-lived FADH2-NAD charge transfer complexes (CTC) resistant to oxidation. Also dimerizes with isoform 3 preventing its release from mitochondria. Interacts with XIAP/BIRC4. Interacts (via N-terminus) with EIF3G (via C-terminus). Interacts with PRELID1. Interacts with CHCHD4; the interaction increases in presence of NADH. Interacts with processed form of PARP1 (Poly [ADP-ribose] polymerase 1, processed C-terminus); interaction is mediated with poly-ADP-ribose chains attached to PARP1, promoting translocation into the nucleus. FAD serves as cofactor. Under normal conditions, a 54-residue N-terminal segment is first proteolytically removed during or just after translocation into the mitochondrial intermembrane space (IMS) by the mitochondrial processing peptidase (MPP) to form the inner-membrane-anchored mature form (AIFmit). During apoptosis, it is further proteolytically processed at amino-acid position 101 leading to the generation of the mature form, which is confined to the mitochondrial IMS in a soluble form (AIFsol). AIFsol is released to the cytoplasm in response to specific death signals, and translocated to the nucleus, where it induces nuclear apoptosis in a caspase-independent manner. In terms of processing, ubiquitination by XIAP/BIRC4 does not lead to proteasomal degradation. Ubiquitination at Lys-255 by XIAP/BIRC4 blocks its ability to bind DNA and induce chromatin degradation, thereby inhibiting its ability to induce cell death. In terms of tissue distribution, expressed in all tested tissues. Detected in muscle and skin fibroblasts (at protein level). Expressed in osteoblasts (at protein level). As to expression, brain specific. Expressed in all tested tissues except brain. In terms of tissue distribution, isoform 5 is frequently down-regulated in human cancers.

The protein resides in the mitochondrion intermembrane space. It is found in the mitochondrion inner membrane. It localises to the cytoplasm. Its subcellular location is the nucleus. The protein localises to the perinuclear region. The protein resides in the mitochondrion. It is found in the cytosol. It carries out the reaction A + NADH + H(+) = AH2 + NAD(+). In terms of biological role, functions both as NADH oxidoreductase and as regulator of apoptosis. In response to apoptotic stimuli, it is released from the mitochondrion intermembrane space into the cytosol and to the nucleus, where it functions as a proapoptotic factor in a caspase-independent pathway. Release into the cytoplasm is mediated upon binding to poly-ADP-ribose chains. The soluble form (AIFsol) found in the nucleus induces 'parthanatos' i.e. caspase-independent fragmentation of chromosomal DNA. Binds to DNA in a sequence-independent manner. Interacts with EIF3G, and thereby inhibits the EIF3 machinery and protein synthesis, and activates caspase-7 to amplify apoptosis. Plays a critical role in caspase-independent, pyknotic cell death in hydrogen peroxide-exposed cells. In contrast, participates in normal mitochondrial metabolism. Plays an important role in the regulation of respiratory chain biogenesis by interacting with CHCHD4 and controlling CHCHD4 mitochondrial import. Functionally, has NADH oxidoreductase activity. Does not induce nuclear apoptosis. Pro-apoptotic isoform. This is Apoptosis-inducing factor 1, mitochondrial from Homo sapiens (Human).